Consider the following 229-residue polypeptide: MAKLTKKMKAIKAGVDSTKAYEINEAIAVLKQFATAKFVESVDVAVNLGIDPRKSDQNVRGATVLPHGTGREVRVAVFTQGANADAAKEAGADLVGMEDLAEQIKKGEMNFDVVIASPDAMRVVGQLGQVLGPRGLMPNPKVGTVTPNVAEAVKNAKSGQIRYRNDKNGIIHTTIGKANFSEVQLKENLQALLVALNKAKPTTAKGIFIKKVSISTTMGAGVAVDQASL.

Belongs to the universal ribosomal protein uL1 family. Part of the 50S ribosomal subunit.

Binds directly to 23S rRNA. The L1 stalk is quite mobile in the ribosome, and is involved in E site tRNA release. In terms of biological role, protein L1 is also a translational repressor protein, it controls the translation of the L11 operon by binding to its mRNA. The chain is Large ribosomal subunit protein uL1 from Haemophilus influenzae (strain PittEE).